The sequence spans 726 residues: Cyclin-T1 (726 aa).

Phosphoserine is present on S117. Residues 253 to 270 (KRIWNWRACEAAKKTKAD) carry the Nuclear localization signal, and interaction with Tat-TAR RNA motif. Residue S340 is modified to Phosphoserine. K342 is covalently cross-linked (Glycyl lysine isopeptide (Lys-Gly) (interchain with G-Cter in SUMO2)). Positions 360 to 385 (VDHSLPQDGSNAFISQKQNSKSVPSA) are disordered. The span at 366–382 (QDGSNAFISQKQNSKSV) shows a compositional bias: polar residues. Positions 384 to 425 (SAKVSLKEYRAKHAEELAAQKRQLENMEANVKSQYAYAAQNL) form a coiled coil. At S388 the chain carries Phosphoserine. The residue at position 390 (K390) is an N6-acetyllysine. A Glycyl lysine isopeptide (Lys-Gly) (interchain with G-Cter in SUMO2) cross-link involves residue K415. An ADP-ribosylserine mark is found at S416, S474, and S475. Positions 480–550 (IKMRIKVHAA…RPGDPKHSSQ (71 aa)) are histidine-rich domain (HRD). Residue K481 forms a Glycyl lysine isopeptide (Lys-Gly) (interchain with G-Cter in SUMO2) linkage. The residue at position 485 (K485) is an N6-(ADP-ribosyl)lysine. Residue H487 is modified to ADP-ribosylhistidine. Basic and acidic residues predominate over residues 487–506 (HAAADKHNSVEDSVTKSREH). Disordered regions lie at residues 487 to 650 (HAAA…NGHN) and 688 to 726 (SDYLNPRSGGISSRSGNTDKPRPPPLPSEPPPPLPPLPK). S495 and S499 each carry phosphoserine. The segment covering 507–530 (KEKHKTHPSNHHHHHNHHSHKHSH) has biased composition (basic residues). The segment at 527–570 (KHSHSQLPVGTGNKRPGDPKHSSQTSNLAHKTYSLSSSFSSSSS) is required for interaction with ZMYND8. H530 carries the ADP-ribosylhistidine modification. ADP-ribosylserine is present on residues S531, S549, and S552. H556 carries the ADP-ribosylhistidine modification. Low complexity predominate over residues 560 to 570 (SLSSSFSSSSS). The residue at position 563 (S563) is an ADP-ribosylserine. A phosphoserine mark is found at S564 and S577. Residues 594–609 (STKSSSLNFSFPSLPT) are compositionally biased toward low complexity. Polar residues predominate over residues 615–630 (GHSSDTSGLSFSQPSC). S637 carries the post-translational modification ADP-ribosylserine. Over residues 710 to 726 (PPPLPSEPPPPLPPLPK) the composition is skewed to pro residues.

It belongs to the cyclin family. Cyclin C subfamily. In terms of assembly, cyclin-T1 is the predominant cyclin that associates with CDK9 to form a heterodimer called P-TEFb. P-TEFb forms a complex with AFF4/AF5Q31. Component of a complex which is at least composed of HTATSF1/Tat-SF1, P-TEFb complex, RNA pol II, SUPT5H, and NCL/nucleolin. Component of the 7SK snRNP complex at least composed of P-TEFb (composed of CDK9 and CCNT1/cyclin-T1), HEXIM1, HEXIM2, BCDIN3, SART3 proteins and 7SK and U6 snRNAs. Interacts (via central region) with ZMYND8 (via N-terminus); the interaction is direct and the association appears to occur between homodimeric ZMYND8 and the activated form of the P-TEFb complex. Interacts with BRD4, targets chromatin binding. Interacts with JMJD6. Interacts with MDFIC. Interacts with HSF1. Interacts with HTATSF1. Interacts with TBX21. (Microbial infection) Interacts with the transactivation region of HIV-1, HIV-2 and SIV Tat. As to quaternary structure, (Microbial infection) Interacts with human herpes virus 1 (HHV-1) transcriptional regulator ICP22. Post-translationally, ADP-ribosylation on serine residues by PARP1 in response to DNA damage disrupts the phase separation activity of CCNT1, thereby preventing activation of CDK9. In terms of tissue distribution, ubiquitously expressed.

It is found in the nucleus. In terms of biological role, regulatory subunit of the cyclin-dependent kinase pair (CDK9/cyclin-T1) complex, also called positive transcription elongation factor B (P-TEFb), which facilitates the transition from abortive to productive elongation by phosphorylating the CTD (C-terminal domain) of the large subunit of RNA polymerase II (RNA Pol II). Required to activate the protein kinase activity of CDK9: acts by mediating formation of liquid-liquid phase separation (LLPS) that enhances binding of P-TEFb to the CTD of RNA Pol II. Its function is as follows. (Microbial infection) In case of HIV or SIV infections, binds to the transactivation domain of the viral nuclear transcriptional activator, Tat, thereby increasing Tat's affinity for the transactivating response RNA element (TAR RNA). Serves as an essential cofactor for Tat, by promoting RNA Pol II activation, allowing transcription of viral genes. The chain is Cyclin-T1 (CCNT1) from Homo sapiens (Human).